The sequence spans 318 residues: GTP 3',8-cyclase (318 aa).

The Radical SAM core domain occupies 5–217 (KFERKIDYIR…DKIAKKYKFK (213 aa)). Residue arginine 14 coordinates GTP. Residues cysteine 21 and cysteine 25 each contribute to the [4Fe-4S] cluster site. Residue tyrosine 27 coordinates S-adenosyl-L-methionine. Cysteine 28 is a [4Fe-4S] cluster binding site. Arginine 64 is a binding site for GTP. Residue glycine 68 participates in S-adenosyl-L-methionine binding. GTP is bound at residue threonine 95. Serine 119 serves as a coordination point for S-adenosyl-L-methionine. Position 155 (lysine 155) interacts with GTP. S-adenosyl-L-methionine is bound at residue methionine 189. 2 residues coordinate [4Fe-4S] cluster: cysteine 248 and cysteine 251. 253–255 (RIR) is a GTP binding site. Cysteine 265 provides a ligand contact to [4Fe-4S] cluster.

The protein belongs to the radical SAM superfamily. MoaA family. In terms of assembly, monomer and homodimer. It depends on [4Fe-4S] cluster as a cofactor.

It carries out the reaction GTP + AH2 + S-adenosyl-L-methionine = (8S)-3',8-cyclo-7,8-dihydroguanosine 5'-triphosphate + 5'-deoxyadenosine + L-methionine + A + H(+). It participates in cofactor biosynthesis; molybdopterin biosynthesis. Functionally, catalyzes the cyclization of GTP to (8S)-3',8-cyclo-7,8-dihydroguanosine 5'-triphosphate. The protein is GTP 3',8-cyclase of Nautilia profundicola (strain ATCC BAA-1463 / DSM 18972 / AmH).